The following is a 344-amino-acid chain: Arginine N-succinyltransferase (344 aa).

Leu125 provides a ligand contact to succinyl-CoA. His229 functions as the Proton donor in the catalytic mechanism.

Belongs to the arginine N-succinyltransferase family.

It carries out the reaction succinyl-CoA + L-arginine = N(2)-succinyl-L-arginine + CoA + H(+). It functions in the pathway amino-acid degradation; L-arginine degradation via AST pathway; L-glutamate and succinate from L-arginine: step 1/5. Catalyzes the transfer of succinyl-CoA to arginine to produce N(2)-succinylarginine. This chain is Arginine N-succinyltransferase, found in Escherichia coli (strain 55989 / EAEC).